Reading from the N-terminus, the 591-residue chain is Aspartate--tRNA(Asp/Asn) ligase (591 aa).

Residue E170 coordinates L-aspartate. The interval Q194–K197 is aspartate. R216 lines the L-aspartate pocket. Residues R216–E218 and Q225 each bind ATP. Position 448 (H448) interacts with L-aspartate. Residue E482 coordinates ATP. Position 489 (R489) interacts with L-aspartate. G534–R537 lines the ATP pocket. The segment at G559–H591 is disordered. Basic and acidic residues predominate over residues Q574 to H591.

This sequence belongs to the class-II aminoacyl-tRNA synthetase family. Type 1 subfamily. Homodimer.

It is found in the cytoplasm. The enzyme catalyses tRNA(Asx) + L-aspartate + ATP = L-aspartyl-tRNA(Asx) + AMP + diphosphate. Functionally, aspartyl-tRNA synthetase with relaxed tRNA specificity since it is able to aspartylate not only its cognate tRNA(Asp) but also tRNA(Asn). Reaction proceeds in two steps: L-aspartate is first activated by ATP to form Asp-AMP and then transferred to the acceptor end of tRNA(Asp/Asn). The chain is Aspartate--tRNA(Asp/Asn) ligase from Mycolicibacterium paratuberculosis (strain ATCC BAA-968 / K-10) (Mycobacterium paratuberculosis).